The primary structure comprises 178 residues: uncharacterized protein (178 aa).

A helical transmembrane segment spans residues 7–29 (FFVIFSILWGSLFLFSIIGSLGT).

Its subcellular location is the membrane. This is an uncharacterized protein from Bacillus subtilis (strain 168).